The following is a 396-amino-acid chain: Elongation factor Tu (396 aa).

Positions 10–205 (KPHVNIGTIG…ACDDNIPDPV (196 aa)) constitute a tr-type G domain. The interval 19-26 (GHVDHGKT) is G1. 19-26 (GHVDHGKT) is a GTP binding site. Threonine 26 lines the Mg(2+) pocket. The interval 62 to 66 (GITIN) is G2. Residues 83–86 (DAPG) are G3. GTP-binding positions include 83-87 (DAPGH) and 138-141 (NKCD). The segment at 138-141 (NKCD) is G4. The tract at residues 175–177 (SAL) is G5.

It belongs to the TRAFAC class translation factor GTPase superfamily. Classic translation factor GTPase family. EF-Tu/EF-1A subfamily. Monomer.

It localises to the cytoplasm. It carries out the reaction GTP + H2O = GDP + phosphate + H(+). Its function is as follows. GTP hydrolase that promotes the GTP-dependent binding of aminoacyl-tRNA to the A-site of ribosomes during protein biosynthesis. The chain is Elongation factor Tu from Corynebacterium glutamicum (strain R).